A 265-amino-acid chain; its full sequence is Hydroxyethylthiazole kinase (265 aa).

Methionine 50 contributes to the substrate binding site. ATP-binding residues include arginine 125 and threonine 171. Residue glycine 198 coordinates substrate.

Belongs to the Thz kinase family. The cofactor is Mg(2+).

The catalysed reaction is 5-(2-hydroxyethyl)-4-methylthiazole + ATP = 4-methyl-5-(2-phosphooxyethyl)-thiazole + ADP + H(+). It participates in cofactor biosynthesis; thiamine diphosphate biosynthesis; 4-methyl-5-(2-phosphoethyl)-thiazole from 5-(2-hydroxyethyl)-4-methylthiazole: step 1/1. Catalyzes the phosphorylation of the hydroxyl group of 4-methyl-5-beta-hydroxyethylthiazole (THZ). The sequence is that of Hydroxyethylthiazole kinase from Salmonella newport (strain SL254).